A 101-amino-acid polypeptide reads, in one-letter code: Urease subunit beta (101 aa).

It belongs to the urease beta subunit family. Heterotrimer of UreA (gamma), UreB (beta) and UreC (alpha) subunits. Three heterotrimers associate to form the active enzyme.

It is found in the cytoplasm. It carries out the reaction urea + 2 H2O + H(+) = hydrogencarbonate + 2 NH4(+). It functions in the pathway nitrogen metabolism; urea degradation; CO(2) and NH(3) from urea (urease route): step 1/1. This chain is Urease subunit beta, found in Pseudomonas paraeruginosa (strain DSM 24068 / PA7) (Pseudomonas aeruginosa (strain PA7)).